The primary structure comprises 219 residues: FMN-dependent NADH:quinone oxidoreductase 2 (219 aa).

Residues Ser10 and 23 to 25 (SIS) contribute to the FMN site.

This sequence belongs to the azoreductase type 1 family. Homodimer. FMN is required as a cofactor.

It catalyses the reaction 2 a quinone + NADH + H(+) = 2 a 1,4-benzosemiquinone + NAD(+). The enzyme catalyses N,N-dimethyl-1,4-phenylenediamine + anthranilate + 2 NAD(+) = 2-(4-dimethylaminophenyl)diazenylbenzoate + 2 NADH + 2 H(+). In terms of biological role, quinone reductase that provides resistance to thiol-specific stress caused by electrophilic quinones. Its function is as follows. Also exhibits azoreductase activity. Catalyzes the reductive cleavage of the azo bond in aromatic azo compounds to the corresponding amines. The sequence is that of FMN-dependent NADH:quinone oxidoreductase 2 from Colwellia psychrerythraea (strain 34H / ATCC BAA-681) (Vibrio psychroerythus).